The chain runs to 431 residues: Enolase (431 aa).

Gln163 lines the (2R)-2-phosphoglycerate pocket. Catalysis depends on Glu205, which acts as the Proton donor. Residues Asp242, Glu288, and Asp315 each contribute to the Mg(2+) site. (2R)-2-phosphoglycerate is bound by residues Lys340, Arg369, Ser370, and Lys391. Residue Lys340 is the Proton acceptor of the active site.

Belongs to the enolase family. Mg(2+) serves as cofactor.

The protein resides in the cytoplasm. The protein localises to the secreted. It localises to the cell surface. It catalyses the reaction (2R)-2-phosphoglycerate = phosphoenolpyruvate + H2O. It functions in the pathway carbohydrate degradation; glycolysis; pyruvate from D-glyceraldehyde 3-phosphate: step 4/5. Functionally, catalyzes the reversible conversion of 2-phosphoglycerate (2-PG) into phosphoenolpyruvate (PEP). It is essential for the degradation of carbohydrates via glycolysis. The protein is Enolase of Acholeplasma laidlawii (strain PG-8A).